The sequence spans 132 residues: Small ribosomal subunit protein uS8 (132 aa).

It belongs to the universal ribosomal protein uS8 family. As to quaternary structure, part of the 30S ribosomal subunit. Contacts proteins S5 and S12.

Its function is as follows. One of the primary rRNA binding proteins, it binds directly to 16S rRNA central domain where it helps coordinate assembly of the platform of the 30S subunit. The sequence is that of Small ribosomal subunit protein uS8 from Nitrobacter winogradskyi (strain ATCC 25391 / DSM 10237 / CIP 104748 / NCIMB 11846 / Nb-255).